Consider the following 467-residue polypeptide: Sexual differentiation process putative subtilase-type proteinase isp6 (467 aa).

Positions 86–176 (YIIVLQPDLS…AVERDQVVSI (91 aa)) constitute an Inhibitor I9 domain. One can recognise a Peptidase S8 domain in the interval 186-467 (PWGLARISHK…NLLAFNGAQE (282 aa)). Active-site charge relay system residues include D221, H253, and S409.

The protein belongs to the peptidase S8 family.

The protein is Sexual differentiation process putative subtilase-type proteinase isp6 (isp6) of Schizosaccharomyces pombe (strain 972 / ATCC 24843) (Fission yeast).